The chain runs to 261 residues: uncharacterized protein (261 aa).

The next 2 helical transmembrane spans lie at 4–21 (RLIAIATFVVTFGILIVL) and 33–55 (FSILSILAAVLTIAAYFFTLVLF).

The protein resides in the cell membrane. This is an uncharacterized protein from Archaeoglobus fulgidus (strain ATCC 49558 / DSM 4304 / JCM 9628 / NBRC 100126 / VC-16).